We begin with the raw amino-acid sequence, 289 residues long: Rhodopsin (289 aa).

Topologically, residues 1 to 7 (YLVNPAA) are extracellular. A helical membrane pass occupies residues 8–32 (YAAPGAYMFLLILVGFPVNFLTLYV). Residues 33-44 (TLEHKKLRTPLN) lie on the Cytoplasmic side of the membrane. Residues 45 to 67 (YILLNLAVADLFMVLGGFTTTMY) form a helical membrane-spanning segment. Over 68–81 (TSMHGYFVLGRLGC) the chain is Extracellular. An intrachain disulfide couples C81 to C158. Residues 82-104 (NLEGFFATLGGEIALWSLVVLAI) traverse the membrane as a helical segment. The 'Ionic lock' involved in activated form stabilization signature appears at 105-107 (ERW). Topologically, residues 105 to 123 (ERWIVVCKPISNFRFTEDH) are cytoplasmic. A helical membrane pass occupies residues 124–144 (AIMGLAFSWVMALTCAVPPLV). Topologically, residues 145-173 (GWSRYIPEGMQCSCGVDYYTRAEGFNNES) are extracellular. N-linked (GlcNAc...) asparagine glycosylation occurs at N171. Residues 174 to 195 (FVIYMFIVHFLIPLSNNFFCYG) form a helical membrane-spanning segment. Residues 196 to 223 (RLLCAVKEAAAAQQESETTQRAEREVSR) are Cytoplasmic-facing. A helical transmembrane segment spans residues 224-245 (MVVMMVVSFLMCWLPYASVAWY). The Extracellular segment spans residues 246-257 (IFCNQGSEFGPI). A helical membrane pass occupies residues 258–279 (FMTLPAFFAKSSAIYNPLIYIC). K267 carries the post-translational modification N6-(retinylidene)lysine. Residues 280-289 (MNKHVRHCMI) are Cytoplasmic-facing.

Belongs to the G-protein coupled receptor 1 family. Opsin subfamily. In terms of processing, phosphorylated on some or all of the serine and threonine residues present in the C-terminal region. Contains one covalently linked retinal chromophore.

It is found in the membrane. Its subcellular location is the cell projection. The protein localises to the cilium. It localises to the photoreceptor outer segment. In terms of biological role, photoreceptor required for image-forming vision at low light intensity. While most salt water fish species use retinal as chromophore, most freshwater fish use 3-dehydroretinal, or a mixture of retinal and 3-dehydroretinal. Light-induced isomerization of 11-cis to all-trans retinal triggers a conformational change that activates signaling via G-proteins. Subsequent receptor phosphorylation mediates displacement of the bound G-protein alpha subunit by arrestin and terminates signaling. This is Rhodopsin (rho) from Cottocomephorus grewingkii (Baikal yellowfin).